Consider the following 545-residue polypeptide: Adenine deaminase (545 aa).

This sequence belongs to the metallo-dependent hydrolases superfamily. Adenine deaminase family. Mn(2+) is required as a cofactor.

The catalysed reaction is adenine + H2O + H(+) = hypoxanthine + NH4(+). The chain is Adenine deaminase from Parabacteroides distasonis (strain ATCC 8503 / DSM 20701 / CIP 104284 / JCM 5825 / NCTC 11152).